The sequence spans 396 residues: S-adenosylmethionine synthase (396 aa).

His16 contributes to the ATP binding site. Asp18 contacts Mg(2+). Glu44 lines the K(+) pocket. Glu57 and Gln100 together coordinate L-methionine. Positions 100–110 are flexible loop; the sequence is QSPDIAQGVNE. Residues 175–177, 242–243, Asp251, 257–258, Ala274, and Lys278 contribute to the ATP site; these read DAK, RF, and RK. An L-methionine-binding site is contributed by Asp251. Residue Lys282 participates in L-methionine binding.

Belongs to the AdoMet synthase family. As to quaternary structure, homotetramer; dimer of dimers. It depends on Mg(2+) as a cofactor. The cofactor is K(+).

It localises to the cytoplasm. It carries out the reaction L-methionine + ATP + H2O = S-adenosyl-L-methionine + phosphate + diphosphate. Its pathway is amino-acid biosynthesis; S-adenosyl-L-methionine biosynthesis; S-adenosyl-L-methionine from L-methionine: step 1/1. Functionally, catalyzes the formation of S-adenosylmethionine (AdoMet) from methionine and ATP. The overall synthetic reaction is composed of two sequential steps, AdoMet formation and the subsequent tripolyphosphate hydrolysis which occurs prior to release of AdoMet from the enzyme. The chain is S-adenosylmethionine synthase from Streptococcus suis (strain 05ZYH33).